The chain runs to 372 residues: Putative glutamate--cysteine ligase 2 (372 aa).

This sequence belongs to the glutamate--cysteine ligase type 2 family. YbdK subfamily. Homodimer.

It catalyses the reaction L-cysteine + L-glutamate + ATP = gamma-L-glutamyl-L-cysteine + ADP + phosphate + H(+). Functionally, ATP-dependent carboxylate-amine ligase which exhibits weak glutamate--cysteine ligase activity. The chain is Putative glutamate--cysteine ligase 2 (ybdK) from Escherichia coli O157:H7.